Consider the following 287-residue polypeptide: Elongation factor Ts (287 aa).

The tract at residues 80 to 83 (TDFL) is involved in Mg(2+) ion dislocation from EF-Tu.

It belongs to the EF-Ts family.

It is found in the cytoplasm. Its function is as follows. Associates with the EF-Tu.GDP complex and induces the exchange of GDP to GTP. It remains bound to the aminoacyl-tRNA.EF-Tu.GTP complex up to the GTP hydrolysis stage on the ribosome. In Pseudomonas entomophila (strain L48), this protein is Elongation factor Ts.